A 359-amino-acid polypeptide reads, in one-letter code: 3-dehydroquinate synthase (359 aa).

NAD(+) is bound by residues 71 to 76 (DGEAHK), 105 to 109 (GVIGD), 129 to 130 (TT), Lys-142, Lys-151, and 169 to 172 (TLHT). The Zn(2+) site is built by Glu-184, His-247, and His-264.

Belongs to the sugar phosphate cyclases superfamily. Dehydroquinate synthase family. The cofactor is NAD(+). Co(2+) serves as cofactor. It depends on Zn(2+) as a cofactor.

The protein resides in the cytoplasm. It catalyses the reaction 7-phospho-2-dehydro-3-deoxy-D-arabino-heptonate = 3-dehydroquinate + phosphate. It participates in metabolic intermediate biosynthesis; chorismate biosynthesis; chorismate from D-erythrose 4-phosphate and phosphoenolpyruvate: step 2/7. In terms of biological role, catalyzes the conversion of 3-deoxy-D-arabino-heptulosonate 7-phosphate (DAHP) to dehydroquinate (DHQ). The chain is 3-dehydroquinate synthase from Neisseria meningitidis serogroup B (strain ATCC BAA-335 / MC58).